We begin with the raw amino-acid sequence, 322 residues long: Protein-L-isoaspartate O-methyltransferase (322 aa).

Positions 1 to 101 are disordered; it reads MSGERAKRFP…AKQGDRSAAP (101 aa). Residues 14–29 show a composition bias toward basic and acidic residues; sequence EDLKREPRKPEGRVAE. 2 stretches are compositionally biased toward low complexity: residues 33–51 and 76–91; these read AGDA…PAAA and HAPA…PQGG. Serine 170 is an active-site residue.

This sequence belongs to the methyltransferase superfamily. L-isoaspartyl/D-aspartyl protein methyltransferase family.

Its subcellular location is the cytoplasm. The enzyme catalyses [protein]-L-isoaspartate + S-adenosyl-L-methionine = [protein]-L-isoaspartate alpha-methyl ester + S-adenosyl-L-homocysteine. Functionally, catalyzes the methyl esterification of L-isoaspartyl residues in peptides and proteins that result from spontaneous decomposition of normal L-aspartyl and L-asparaginyl residues. It plays a role in the repair and/or degradation of damaged proteins. This chain is Protein-L-isoaspartate O-methyltransferase, found in Burkholderia pseudomallei (strain 1106a).